The following is a 319-amino-acid chain: Beta-ketoacyl-[acyl-carrier-protein] synthase III (319 aa).

Active-site residues include Cys112 and His246. The tract at residues 247–251 (QANKR) is ACP-binding. Asn276 is a catalytic residue.

The protein belongs to the thiolase-like superfamily. FabH family. In terms of assembly, homodimer.

It localises to the cytoplasm. It carries out the reaction malonyl-[ACP] + acetyl-CoA + H(+) = 3-oxobutanoyl-[ACP] + CO2 + CoA. It functions in the pathway lipid metabolism; fatty acid biosynthesis. In terms of biological role, catalyzes the condensation reaction of fatty acid synthesis by the addition to an acyl acceptor of two carbons from malonyl-ACP. Catalyzes the first condensation reaction which initiates fatty acid synthesis and may therefore play a role in governing the total rate of fatty acid production. Possesses both acetoacetyl-ACP synthase and acetyl transacylase activities. Its substrate specificity determines the biosynthesis of branched-chain and/or straight-chain of fatty acids. In Psychromonas ingrahamii (strain DSM 17664 / CCUG 51855 / 37), this protein is Beta-ketoacyl-[acyl-carrier-protein] synthase III.